Consider the following 510-residue polypeptide: Inositol-3-phosphate synthase (510 aa).

NAD(+) is bound by residues glycine 70, glycine 71, asparagine 72, asparagine 73, aspartate 143, isoleucine 180, glutamine 190, arginine 193, threonine 230, alanine 231, asparagine 232, threonine 233, glycine 281, serine 282, aspartate 306, serine 309, asparagine 340, asparagine 341, aspartate 342, lysine 355, glycine 393, aspartate 394, aspartate 422, and serine 423.

It belongs to the myo-inositol 1-phosphate synthase family. Requires NAD(+) as cofactor.

It localises to the cytoplasm. The protein localises to the cytosol. The protein resides in the nucleus. It carries out the reaction D-glucose 6-phosphate = 1D-myo-inositol 3-phosphate. It functions in the pathway polyol metabolism; myo-inositol biosynthesis; myo-inositol from D-glucose 6-phosphate: step 1/2. Key enzyme in myo-inositol biosynthesis pathway that catalyzes the conversion of glucose 6-phosphate to 1-myo-inositol 1-phosphate in a NAD-dependent manner. This chain is Inositol-3-phosphate synthase (TUR1), found in Spirodela polyrhiza (Giant duckweed).